Reading from the N-terminus, the 195-residue chain is Thioredoxin reductase-like selenoprotein T (195 aa).

Positions 1 to 19 are cleaved as a signal peptide; the sequence is MRLLLLLLVAASAVVRSEA. Positions 46 to 49 form a cross-link, cysteinyl-selenocysteine (Cys-Sec); it reads CVSU. Position 49 (U49) is a non-standard amino acid, selenocysteine. The chain crosses the membrane as a helical span at residues 85 to 103; sequence IASFLSVFKLVLIGLIIVG.

Belongs to the SelWTH family. Selenoprotein T subfamily. Post-translationally, may contain a selenide-sulfide bond between Cys-46 and Sec-49. This bond is speculated to serve as redox-active pair. In terms of tissue distribution, ubiquitous. Highly expressed in the endocrine pancreas. Expressed at low levels in the adult brain.

It localises to the endoplasmic reticulum membrane. It carries out the reaction [thioredoxin]-dithiol + NADP(+) = [thioredoxin]-disulfide + NADPH + H(+). Its function is as follows. Selenoprotein with thioredoxin reductase-like oxidoreductase activity. Protects dopaminergic neurons against oxidative stress and cell death. Involved in ADCYAP1/PACAP-induced calcium mobilization and neuroendocrine secretion. Plays a role in fibroblast anchorage and redox regulation. In gastric smooth muscle, modulates the contraction processes through the regulation of calcium release and MYLK activation. In pancreatic islets, involved in the control of glucose homeostasis, contributes to prolonged ADCYAP1/PACAP-induced insulin secretion. In Mus musculus (Mouse), this protein is Thioredoxin reductase-like selenoprotein T.